The sequence spans 310 residues: Ribosomal protein L11 methyltransferase (310 aa).

S-adenosyl-L-methionine is bound by residues T153, G174, D196, and N239.

This sequence belongs to the methyltransferase superfamily. PrmA family.

It localises to the cytoplasm. It carries out the reaction L-lysyl-[protein] + 3 S-adenosyl-L-methionine = N(6),N(6),N(6)-trimethyl-L-lysyl-[protein] + 3 S-adenosyl-L-homocysteine + 3 H(+). Functionally, methylates ribosomal protein L11. The chain is Ribosomal protein L11 methyltransferase from Janthinobacterium sp. (strain Marseille) (Minibacterium massiliensis).